Here is a 428-residue protein sequence, read N- to C-terminus: Trigger factor (428 aa).

In terms of domain architecture, PPIase FKBP-type spans 163 to 248; the sequence is GDMVVIDYKG…VHEIKEKELP (86 aa).

This sequence belongs to the FKBP-type PPIase family. Tig subfamily.

The protein resides in the cytoplasm. The enzyme catalyses [protein]-peptidylproline (omega=180) = [protein]-peptidylproline (omega=0). Its function is as follows. Involved in protein export. Acts as a chaperone by maintaining the newly synthesized protein in an open conformation. Functions as a peptidyl-prolyl cis-trans isomerase. In Alkaliphilus metalliredigens (strain QYMF), this protein is Trigger factor.